A 669-amino-acid polypeptide reads, in one-letter code: Acetyl-coenzyme A synthetase (669 aa).

CoA contacts are provided by residues 211 to 214 (RGGK) and T329. ATP-binding positions include 404-406 (GEP), 428-433 (DTYWQT), D519, and R534. S542 is a CoA binding site. An ATP-binding site is contributed by R545. R602 provides a ligand contact to CoA.

Belongs to the ATP-dependent AMP-binding enzyme family.

The catalysed reaction is acetate + ATP + CoA = acetyl-CoA + AMP + diphosphate. It functions in the pathway ketone degradation; acetoin degradation. It participates in antibiotic biosynthesis; penicillin biosynthesis. This is Acetyl-coenzyme A synthetase (facA) from Penicillium chrysogenum (Penicillium notatum).